Consider the following 421-residue polypeptide: Type II methyltransferase M.TaqI (421 aa).

Low complexity predominate over residues 1-18; sequence MGLPPLLSLPSNSAPRSL. Residues 1–20 are disordered; that stretch reads MGLPPLLSLPSNSAPRSLGR. S-adenosyl-L-methionine contacts are provided by residues T23, 45-48, E71, D89, and P107; that span reads EPAC.

This sequence belongs to the N(4)/N(6)-methyltransferase family.

It carries out the reaction a 2'-deoxyadenosine in DNA + S-adenosyl-L-methionine = an N(6)-methyl-2'-deoxyadenosine in DNA + S-adenosyl-L-homocysteine + H(+). A gamma subtype methylase that recognizes the double-stranded sequence 5'-TCGA-3', methylates A-4 on both strands and protects the DNA from cleavage by the TaqI endonuclease. This Thermus aquaticus protein is Type II methyltransferase M.TaqI (taqIM).